Reading from the N-terminus, the 87-residue chain is Small ribosomal subunit protein uS15 (87 aa).

Belongs to the universal ribosomal protein uS15 family. Part of the 30S ribosomal subunit. Forms a bridge to the 50S subunit in the 70S ribosome, contacting the 23S rRNA.

In terms of biological role, one of the primary rRNA binding proteins, it binds directly to 16S rRNA where it helps nucleate assembly of the platform of the 30S subunit by binding and bridging several RNA helices of the 16S rRNA. Functionally, forms an intersubunit bridge (bridge B4) with the 23S rRNA of the 50S subunit in the ribosome. This is Small ribosomal subunit protein uS15 from Ruminiclostridium cellulolyticum (strain ATCC 35319 / DSM 5812 / JCM 6584 / H10) (Clostridium cellulolyticum).